Reading from the N-terminus, the 145-residue chain is Probable flagellum biosynthesis repressor protein FlbT (145 aa).

It belongs to the FlbT family.

Functionally, has a post-transcriptional repressor function in flagellum biogenesis. Associates with the 5'-UTR of fljK mRNA and promotes its degradation. This is Probable flagellum biosynthesis repressor protein FlbT from Chelativorans sp. (strain BNC1).